A 209-amino-acid chain; its full sequence is B3 domain-containing protein At2g31420 (209 aa).

Residues 101–198 constitute a DNA-binding region (TF-B3); that stretch reads LSKLEKSDFL…KLCFALSSPT (98 aa).

The protein localises to the nucleus. The sequence is that of B3 domain-containing protein At2g31420 from Arabidopsis thaliana (Mouse-ear cress).